Consider the following 527-residue polypeptide: Peptide chain release factor 3 (527 aa).

One can recognise a tr-type G domain in the interval 11–278 (AKRRTFAIIS…GFVEWAPPPL (268 aa)). GTP contacts are provided by residues 20–27 (SHPDAGKT), 87–91 (DTPGH), and 141–144 (NKMD).

This sequence belongs to the TRAFAC class translation factor GTPase superfamily. Classic translation factor GTPase family. PrfC subfamily.

It localises to the cytoplasm. Increases the formation of ribosomal termination complexes and stimulates activities of RF-1 and RF-2. It binds guanine nucleotides and has strong preference for UGA stop codons. It may interact directly with the ribosome. The stimulation of RF-1 and RF-2 is significantly reduced by GTP and GDP, but not by GMP. This is Peptide chain release factor 3 from Saccharophagus degradans (strain 2-40 / ATCC 43961 / DSM 17024).